Here is a 93-residue protein sequence, read N- to C-terminus: Acylphosphatase (93 aa).

The region spanning 6 to 93 is the Acylphosphatase-like domain; the sequence is RLVAWVRGQV…RGGYEGFAIR (88 aa). Catalysis depends on residues R21 and N40.

Belongs to the acylphosphatase family.

The enzyme catalyses an acyl phosphate + H2O = a carboxylate + phosphate + H(+). This is Acylphosphatase (acyP) from Streptomyces coelicolor (strain ATCC BAA-471 / A3(2) / M145).